Reading from the N-terminus, the 152-residue chain is Endoribonuclease YbeY (152 aa).

Zn(2+)-binding residues include histidine 113, histidine 117, and histidine 123.

It belongs to the endoribonuclease YbeY family. Zn(2+) is required as a cofactor.

It localises to the cytoplasm. Functionally, single strand-specific metallo-endoribonuclease involved in late-stage 70S ribosome quality control and in maturation of the 3' terminus of the 16S rRNA. This chain is Endoribonuclease YbeY, found in Delftia acidovorans (strain DSM 14801 / SPH-1).